Here is a 223-residue protein sequence, read N- to C-terminus: Deoxyribose-phosphate aldolase (223 aa).

D89 functions as the Proton donor/acceptor in the catalytic mechanism. The Schiff-base intermediate with acetaldehyde role is filled by K152. K181 acts as the Proton donor/acceptor in catalysis.

The protein belongs to the DeoC/FbaB aldolase family. DeoC type 1 subfamily.

The protein resides in the cytoplasm. The enzyme catalyses 2-deoxy-D-ribose 5-phosphate = D-glyceraldehyde 3-phosphate + acetaldehyde. It participates in carbohydrate degradation; 2-deoxy-D-ribose 1-phosphate degradation; D-glyceraldehyde 3-phosphate and acetaldehyde from 2-deoxy-alpha-D-ribose 1-phosphate: step 2/2. Its function is as follows. Catalyzes a reversible aldol reaction between acetaldehyde and D-glyceraldehyde 3-phosphate to generate 2-deoxy-D-ribose 5-phosphate. This is Deoxyribose-phosphate aldolase from Listeria welshimeri serovar 6b (strain ATCC 35897 / DSM 20650 / CCUG 15529 / CIP 8149 / NCTC 11857 / SLCC 5334 / V8).